Reading from the N-terminus, the 291-residue chain is 33 kDa chaperonin (291 aa).

2 disulfides stabilise this stretch: cysteine 229-cysteine 231 and cysteine 262-cysteine 265.

The protein belongs to the HSP33 family. Under oxidizing conditions two disulfide bonds are formed involving the reactive cysteines. Under reducing conditions zinc is bound to the reactive cysteines and the protein is inactive.

It localises to the cytoplasm. Its function is as follows. Redox regulated molecular chaperone. Protects both thermally unfolding and oxidatively damaged proteins from irreversible aggregation. Plays an important role in the bacterial defense system toward oxidative stress. The protein is 33 kDa chaperonin of Aliivibrio fischeri (strain ATCC 700601 / ES114) (Vibrio fischeri).